Here is a 170-residue protein sequence, read N- to C-terminus: Allophycocyanin subunit beta-18 (170 aa).

N74 bears the N4-methylasparagine mark. C84 serves as a coordination point for (2R,3E)-phycocyanobilin.

The protein belongs to the phycobiliprotein family. In terms of assembly, heterodimer of an alpha and a beta chain. Contains one covalently linked bilin chromophore.

The protein resides in the plastid. It localises to the chloroplast thylakoid membrane. In terms of biological role, light-harvesting photosynthetic bile pigment-protein from the phycobiliprotein complex. Allophycocyanin has a maximum absorption at approximately 650 nanometers. In Cyanidium caldarium (Red alga), this protein is Allophycocyanin subunit beta-18 (apcF).